The primary structure comprises 96 residues: uncharacterized protein (96 aa).

Positions 1-23 (MKQFYSVVLTIIIYISSQSNVVS) are cleaved as a signal peptide. 3 cysteine pairs are disulfide-bonded: C60/C74, C67/C78, and C73/C83.

Its subcellular location is the secreted. This is an uncharacterized protein from Schistosoma japonicum (Blood fluke).